The sequence spans 430 residues: Probable carboxypeptidase AO090003000058 (430 aa).

A signal peptide spans 1–16 (MKSIYSLVLCTALTAA). A glycan (N-linked (GlcNAc...) asparagine) is linked at N84. Zn(2+) is bound at residue D156. The active-site Proton acceptor is the E188. E189 contacts Zn(2+). N285 carries an N-linked (GlcNAc...) asparagine glycan.

Belongs to the peptidase M20A family. Requires Zn(2+) as cofactor.

The protein localises to the secreted. The sequence is that of Probable carboxypeptidase AO090003000058 from Aspergillus oryzae (strain ATCC 42149 / RIB 40) (Yellow koji mold).